The sequence spans 1447 residues: Bud site selection protein 4 (1447 aa).

Positions 1 to 16 (MHDAESTVDSLLKEID) are enriched in basic and acidic residues. Disordered regions lie at residues 1 to 38 (MHDAESTVDSLLKEIDNEMEQTKSNITQNGSEDTPHNW) and 57 to 76 (NTRSNATENSRGRSPSKMST). Residue Ser10 is modified to Phosphoserine. 2 stretches are compositionally biased toward polar residues: residues 22–32 (TKSNITQNGSE) and 59–76 (RSNATENSRGRSPSKMST). Phosphoserine is present on residues Ser78, Ser81, Ser91, Ser96, and Ser167. Residues 272 to 316 (NLPSKLLNTSNNSHSDSRSPTASVEDLNISTNLPGADSSQNNPVT) form a disordered region. Residues 277–316 (LLNTSNNSHSDSRSPTASVEDLNISTNLPGADSSQNNPVT) show a composition bias toward polar residues. Thr365 is modified (phosphothreonine). Phosphoserine is present on Ser367. Positions 444-479 (HQESEHANEQPAIIPQKDSSEETFTELNNESEFQRN) are disordered. At Ser511 the chain carries Phosphoserine. The tract at residues 529–591 (KTSAEEHDLS…NEEPEHVPLL (63 aa)) is disordered. Residues 538-548 (SSSCEDQSVSE) show a composition bias toward polar residues. The segment covering 549–580 (ARNKDRIEEKEVETKDENIETEKDESEYHKVE) has biased composition (basic and acidic residues). The residue at position 616 (Ser616) is a Phosphoserine. Residues 648–664 (ANSQFSQQSSITTASTV) show a composition bias toward polar residues. Residues 648-673 (ANSQFSQQSSITTASTVDSKKDNGST) are disordered. The interaction with IQG1 stretch occupies residues 768 to 879 (EHENIPLSTH…SLWESSYELK (112 aa)). 2 positions are modified to phosphoserine: Ser805 and Ser811. The PH domain maps to 1302-1413 (NIYKEGYLLQ…WYNKLQEVVE (112 aa)).

In terms of assembly, interacts with AXL1, AXL2, IQG1 and SEC3. In terms of processing, phosphorylated by CDC28.

It localises to the bud neck. Its function is as follows. Required for establishment of the axial budding pattern in haploid cells. Cooperates with other bud site selection proteins to recognize a spatial landmark during mitosis and they subsequently become a landmark for downstream polarity establishment factors that coordinate axial budding and cytokinesis. Involved in the septin organization at the bud neck. The sequence is that of Bud site selection protein 4 (BUD4) from Saccharomyces cerevisiae (strain ATCC 204508 / S288c) (Baker's yeast).